The chain runs to 919 residues: Eukaryotic translation initiation factor 3 subunit C (919 aa).

The segment at 1–28 (MSRFFANGSDSESESSEEEVQAPNFNKA) is disordered. Over residues 11–20 (SESESSEEEV) the composition is skewed to acidic residues. Residues serine 34, serine 165, and serine 177 each carry the phosphoserine modification. A disordered region spans residues 154-275 (LSRFRENPQE…EQKIKLRKRA (122 aa)). Over residues 162-171 (QEESENEDEE) the composition is skewed to acidic residues. Over residues 210 to 236 (ADDEDSDESIDWDPDTESETESSEDEN) the composition is skewed to acidic residues. Basic and acidic residues predominate over residues 241–269 (MRERFLKRSTEKDDKDDDKRKDKRKEQKI). The PCI domain maps to 640-816 (FHMHINLELL…ETVVMHRSEP (177 aa)). Residues 848–919 (FFQRGNMGNR…QQQVQTIDEE (72 aa)) form a disordered region. Residues 883 to 894 (QRNRNQRGHHKN) show a composition bias toward basic residues. A compositionally biased stretch (low complexity) spans 895 to 919 (QQNQNQQQQQQHQREQQQVQTIDEE).

This sequence belongs to the eIF-3 subunit C family. As to quaternary structure, component of the eukaryotic translation initiation factor 3 (eIF-3) complex. The eIF-3 complex interacts with pix.

It localises to the cytoplasm. Functionally, component of the eukaryotic translation initiation factor 3 (eIF-3) complex, which is involved in protein synthesis of a specialized repertoire of mRNAs and, together with other initiation factors, stimulates binding of mRNA and methionyl-tRNAi to the 40S ribosome. The eIF-3 complex specifically targets and initiates translation of a subset of mRNAs involved in cell proliferation. The protein is Eukaryotic translation initiation factor 3 subunit C of Drosophila willistoni (Fruit fly).